The primary structure comprises 262 residues: tRNA (guanine-N(1)-)-methyltransferase (262 aa).

S-adenosyl-L-methionine contacts are provided by residues Gly113 and 137-142 (IGDYVL).

This sequence belongs to the RNA methyltransferase TrmD family. In terms of assembly, homodimer.

Its subcellular location is the cytoplasm. It catalyses the reaction guanosine(37) in tRNA + S-adenosyl-L-methionine = N(1)-methylguanosine(37) in tRNA + S-adenosyl-L-homocysteine + H(+). In terms of biological role, specifically methylates guanosine-37 in various tRNAs. In Thermobifida fusca (strain YX), this protein is tRNA (guanine-N(1)-)-methyltransferase.